The chain runs to 97 residues: Alpha-latrotoxin associated low molecular weight protein 2 (97 aa).

The signal sequence occupies residues 1–19 (MFKLICIVFIATILSITSA). Cystine bridges form between Cys36–Cys72, Cys52–Cys68, and Cys55–Cys81.

It belongs to the arthropod CHH/MIH/GIH/VIH hormone family. In terms of tissue distribution, expressed by the venom gland.

It localises to the secreted. In terms of biological role, may increase the toxicity of alpha-latrotoxin and/or other venom components. Is non-toxic to mice and to the cockroach Periplaneta americana. This is Alpha-latrotoxin associated low molecular weight protein 2 from Steatoda grossa (False black widow).